Here is a 363-residue protein sequence, read N- to C-terminus: Cytochrome c oxidase subunit 2 (363 aa).

Positions 1–23 are disordered; it reads MTPRGPGRLQRLSQCRPQRGSGG. An N-terminal signal peptide occupies residues 1–41; sequence MTPRGPGRLQRLSQCRPQRGSGGPARGLRQLALAAMLGALA. Helical transmembrane passes span 71–91 and 118–138; these read LWIG…GLIF and LVLT…TVVV. Cu cation is bound by residues H254, C295, C299, and H303.

The protein belongs to the cytochrome c oxidase subunit 2 family. The cofactor is Cu cation. Heme is required as a cofactor.

Its subcellular location is the cell membrane. The catalysed reaction is 4 Fe(II)-[cytochrome c] + O2 + 8 H(+)(in) = 4 Fe(III)-[cytochrome c] + 2 H2O + 4 H(+)(out). In terms of biological role, subunits I and II form the functional core of the enzyme complex. Electrons originating in cytochrome c are transferred via heme a and Cu(A) to the binuclear center formed by heme a3 and Cu(B). The protein is Cytochrome c oxidase subunit 2 (ctaC) of Mycobacterium bovis (strain ATCC BAA-935 / AF2122/97).